Reading from the N-terminus, the 127-residue chain is Glycine cleavage system H protein (127 aa).

The region spanning 22–104 is the Lipoyl-binding domain; the sequence is EVVIGITHFA…YEGAWMVKVE (83 aa). At Lys-63 the chain carries N6-lipoyllysine.

The protein belongs to the GcvH family. As to quaternary structure, the glycine cleavage system is composed of four proteins: P, T, L and H. It depends on (R)-lipoate as a cofactor.

Functionally, the glycine cleavage system catalyzes the degradation of glycine. The H protein shuttles the methylamine group of glycine from the P protein to the T protein. Its function is as follows. Is also involved in protein lipoylation via its role as an octanoyl/lipoyl carrier protein intermediate. This is Glycine cleavage system H protein from Bacillus cereus (strain G9842).